The chain runs to 363 residues: Heat-inducible transcription repressor HrcA (363 aa).

The protein belongs to the HrcA family.

Its function is as follows. Negative regulator of class I heat shock genes (grpE-dnaK-dnaJ and groELS operons). Prevents heat-shock induction of these operons. The protein is Heat-inducible transcription repressor HrcA of Afipia carboxidovorans (strain ATCC 49405 / DSM 1227 / KCTC 32145 / OM5) (Oligotropha carboxidovorans).